We begin with the raw amino-acid sequence, 474 residues long: Protein NAR1 (474 aa).

The [4Fe-4S] cluster site is built by Cys24, Cys61, Cys64, Cys67, Cys177, Cys233, Cys390, and Cys394.

The protein belongs to the NARF family. As to quaternary structure, part of a complex composed of AE7, CIA1, MMS19 and NAR1. Interacts with CIA1. As to expression, expressed in developing tissues, including shoot apex, young leaves, vascular tissues, root tips, pedicels, carpels and developing seeds.

The protein localises to the nucleus. It is found in the cytoplasm. Essential component of the cytosolic iron-sulfur (Fe-S) protein assembly (CIA) machinery. Required for the maturation of extramitochondrial Fe/S proteins. Required for expression of the imprinted FWA gene, for seed development and is involved in the oxidative stress response in vegetative tissues. Involved in the regulation of cell size, ploidy and cell cycle progression. Required for growth under normoxic conditions and necessary for recovery after hypoxic treatment but its action is reactive oxygen species (ROS) independent. This chain is Protein NAR1, found in Arabidopsis thaliana (Mouse-ear cress).